A 597-amino-acid chain; its full sequence is Probable tyrosine-protein phosphatase (597 aa).

Positions 55 to 81 (VSSSSDAAPTSISTTTTSTTSMTDASA) are enriched in low complexity. 3 disordered regions span residues 55–89 (VSSS…QQVY), 107–172 (SFSI…PNSL), and 188–228 (STNG…GNNN). Positions 107–126 (SFSIQPNQTPTMLPTSSYTL) are enriched in polar residues. Residues 136 to 151 (TSSISSISSTSSNSTS) are compositionally biased toward low complexity. 2 stretches are compositionally biased toward polar residues: residues 188 to 206 (STNG…NQPR) and 216 to 228 (KKST…GNNN). Residues 428–579 (GPKNVLNNLI…LMEFGDKLNN (152 aa)) enclose the Tyrosine-protein phosphatase domain. Cys-516 acts as the Phosphocysteine intermediate in catalysis.

It belongs to the protein-tyrosine phosphatase family. Non-receptor class dual specificity subfamily.

It catalyses the reaction O-phospho-L-tyrosyl-[protein] + H2O = L-tyrosyl-[protein] + phosphate. The polypeptide is Probable tyrosine-protein phosphatase (CPP1) (Candida albicans (strain WO-1) (Yeast)).